The sequence spans 314 residues: Secreted frizzled-related protein 1 (314 aa).

The signal sequence occupies residues Met-1–Ala-31. Residues Thr-53 to Met-169 enclose the FZ domain. 5 disulfide bridges follow: Cys-58-Cys-121, Cys-68-Cys-114, Cys-105-Cys-140, Cys-129-Cys-166, and Cys-133-Cys-157. Asn-173 carries an N-linked (GlcNAc...) asparagine glycan. 3 cysteine pairs are disulfide-bonded: Cys-186-Cys-256, Cys-189-Cys-258, and Cys-203-Cys-306. Residues Cys-186–Cys-306 enclose the NTR domain.

This sequence belongs to the secreted frizzled-related protein (sFRP) family. Interacts with WNT8, WNT1, WNT2, WNT4 and FRZD6. Interacts with MYOC. In terms of tissue distribution, highly expressed in kidney and embryonic heart. Also highly expressed in the eye, where it is principally localized to the ciliary body and the lens epithelium. Weaker expression in heart, lung and brain. In the brain, is expressed exclusively in the choroid plexus.

The protein localises to the secreted. Its function is as follows. Soluble frizzled-related proteins (sFRPS) function as modulators of Wnt signaling through direct interaction with Wnts. They have a role in regulating cell growth and differentiation in specific cell types. SFRP1 decreases intracellular beta-catenin levels. Has antiproliferative effects on vascular cells, in vitro and in vivo, and can induce, in vivo, an angiogenic response. In vascular cell cycle, delays the G1 phase and entry into the S phase. In kidney development, inhibits tubule formation and bud growth in metanephroi. Inhibits WNT1/WNT4-mediated TCF-dependent transcription. This is Secreted frizzled-related protein 1 from Mus musculus (Mouse).